Consider the following 578-residue polypeptide: Translation initiation factor eIF2B subunit gamma (578 aa).

2 positions are modified to phosphoserine: serine 296 and serine 300. Disordered regions lie at residues 298 to 337 (QASF…SATS) and 535 to 578 (DDSV…LFER). Position 306 is a phosphothreonine (threonine 306). The span at 544–578 (EIAEETDSDDRSDEDSDDSEYTDEYEYEDDGLFER) shows a compositional bias: acidic residues.

Belongs to the eIF-2B gamma/epsilon subunits family. Component of the translation initiation factor 2B (eIF2B) complex which is a heterodecamer of two sets of five different subunits: alpha, beta, gamma, delta and epsilon. Subunits alpha, beta and delta comprise a regulatory subcomplex and subunits epsilon and gamma comprise a catalytic subcomplex. Within the complex, the hexameric regulatory complex resides at the center, with the two heterodimeric catalytic subcomplexes bound on opposite sides.

The protein localises to the cytoplasm. It is found in the cytosol. Functionally, acts as a component of the translation initiation factor 2B (eIF2B) complex, which catalyzes the exchange of GDP for GTP on the eukaryotic initiation factor 2 (eIF2) complex gamma subunit. Its guanine nucleotide exchange factor activity is repressed when bound to eIF2 complex phosphorylated on the alpha subunit, thereby limiting the amount of methionyl-initiator methionine tRNA available to the ribosome and consequently global translation is repressed. It activates the synthesis of GCN4 in yeast under amino acid starvation conditions by suppressing the inhibitory effects of multiple AUG codons present in the leader of GCN4 mRNA. It may promote either repression or activation of GCN4 expression depending on amino acid availability. GCD1 stabilizes the interaction between eIF2 and GCD6 and stimulates the catalytic activity in vitro. This Saccharomyces cerevisiae (strain ATCC 204508 / S288c) (Baker's yeast) protein is Translation initiation factor eIF2B subunit gamma (GCD1).